A 238-amino-acid chain; its full sequence is tRNA (guanine-N(7)-)-methyltransferase (238 aa).

S-adenosyl-L-methionine contacts are provided by Glu-62, Glu-87, Asp-119, and Asp-141. Asp-141 is an active-site residue. Substrate contacts are provided by residues Lys-145, Asp-177, and 216–219 (TRYE).

Belongs to the class I-like SAM-binding methyltransferase superfamily. TrmB family.

It carries out the reaction guanosine(46) in tRNA + S-adenosyl-L-methionine = N(7)-methylguanosine(46) in tRNA + S-adenosyl-L-homocysteine. The protein operates within tRNA modification; N(7)-methylguanine-tRNA biosynthesis. Its function is as follows. Catalyzes the formation of N(7)-methylguanine at position 46 (m7G46) in tRNA. The sequence is that of tRNA (guanine-N(7)-)-methyltransferase from Novosphingobium aromaticivorans (strain ATCC 700278 / DSM 12444 / CCUG 56034 / CIP 105152 / NBRC 16084 / F199).